The sequence spans 160 residues: Small ribosomal subunit protein uS7 (160 aa).

It belongs to the universal ribosomal protein uS7 family. As to quaternary structure, part of the 30S ribosomal subunit. Contacts proteins S9 and S11.

Its function is as follows. One of the primary rRNA binding proteins, it binds directly to 16S rRNA where it nucleates assembly of the head domain of the 30S subunit. Is located at the subunit interface close to the decoding center, probably blocks exit of the E-site tRNA. This is Small ribosomal subunit protein uS7 from Rickettsia massiliae (strain Mtu5).